A 484-amino-acid chain; its full sequence is Protein nucleotidyltransferase YdiU (484 aa).

Positions 81, 83, 84, 103, 115, 116, 166, and 173 each coordinate ATP. The active-site Proton acceptor is aspartate 244. Asparagine 245 and aspartate 254 together coordinate Mg(2+). Residue aspartate 254 coordinates ATP.

Belongs to the SELO family. The cofactor is Mg(2+). Mn(2+) is required as a cofactor.

The catalysed reaction is L-seryl-[protein] + ATP = 3-O-(5'-adenylyl)-L-seryl-[protein] + diphosphate. It catalyses the reaction L-threonyl-[protein] + ATP = 3-O-(5'-adenylyl)-L-threonyl-[protein] + diphosphate. It carries out the reaction L-tyrosyl-[protein] + ATP = O-(5'-adenylyl)-L-tyrosyl-[protein] + diphosphate. The enzyme catalyses L-histidyl-[protein] + UTP = N(tele)-(5'-uridylyl)-L-histidyl-[protein] + diphosphate. The catalysed reaction is L-seryl-[protein] + UTP = O-(5'-uridylyl)-L-seryl-[protein] + diphosphate. It catalyses the reaction L-tyrosyl-[protein] + UTP = O-(5'-uridylyl)-L-tyrosyl-[protein] + diphosphate. In terms of biological role, nucleotidyltransferase involved in the post-translational modification of proteins. It can catalyze the addition of adenosine monophosphate (AMP) or uridine monophosphate (UMP) to a protein, resulting in modifications known as AMPylation and UMPylation. In Shewanella oneidensis (strain ATCC 700550 / JCM 31522 / CIP 106686 / LMG 19005 / NCIMB 14063 / MR-1), this protein is Protein nucleotidyltransferase YdiU.